A 569-amino-acid polypeptide reads, in one-letter code: Urease subunit beta (569 aa).

A Urease domain is found at 131 to 569 (GGIDTHIHFI…VSLAQLFSIF (439 aa)). Ni(2+) contacts are provided by histidine 136, histidine 138, and lysine 219. Lysine 219 is subject to N6-carboxylysine. Histidine 221 serves as a coordination point for substrate. Residues histidine 248 and histidine 274 each coordinate Ni(2+). Histidine 322 serves as the catalytic Proton donor. Aspartate 362 is a Ni(2+) binding site.

It belongs to the metallo-dependent hydrolases superfamily. Urease alpha subunit family. In terms of assembly, heterohexamer of 3 UreA (alpha) and 3 UreB (beta) subunits. The cofactor is Ni cation. Post-translationally, carboxylation allows a single lysine to coordinate two nickel ions.

The protein localises to the cytoplasm. The enzyme catalyses urea + 2 H2O + H(+) = hydrogencarbonate + 2 NH4(+). It participates in nitrogen metabolism; urea degradation; CO(2) and NH(3) from urea (urease route): step 1/1. The polypeptide is Urease subunit beta (Helicobacter pylori (strain HPAG1)).